Consider the following 80-residue polypeptide: Defensin-like protein 1 (80 aa).

A signal peptide spans 1–29 (MAKFASIIALLFAALVLFAAFEAPTMVEA). Q30 carries the pyrrolidone carboxylic acid modification. Intrachain disulfides connect C33-C80, C44-C65, C50-C74, and C54-C76.

Belongs to the DEFL family. In terms of assembly, forms oligomers in its native state.

The protein localises to the secreted. In terms of biological role, possesses antifungal activity sensitive to inorganic cations. The polypeptide is Defensin-like protein 1 (AFP1) (Raphanus sativus (Radish)).